We begin with the raw amino-acid sequence, 564 residues long: Hexose transporter HXT17 (564 aa).

Over residues 1-12 (MQSSTESDRDIQ) the composition is skewed to basic and acidic residues. The disordered stretch occupies residues 1-22 (MQSSTESDRDIQDGPDADIHVA). Residues 1–52 (MQSSTESDRDIQDGPDADIHVAPPVEKEWSDGFDDNEVINGDNVEPPKRGLI) are Cytoplasmic-facing. A helical transmembrane segment spans residues 53 to 73 (GYLVIYLLCYPISFGGFLPGW). The Extracellular segment spans residues 74 to 109 (DSGITAGFINMDNFKMNFGSYKHSTGEYYLSNVRMG). A helical transmembrane segment spans residues 110-130 (LLVAMFSIGCAIGGLIFARLA). Over 131–136 (DTLGRR) the chain is Cytoplasmic. A helical transmembrane segment spans residues 137–157 (LAIVIVVLVYMVGAIIQISSN). At 158–167 (HKWYQYFVGK) the chain is on the extracellular side. The helical transmembrane segment at 168–188 (IIYGLGAGGCSVLCPMLLSEI) threads the bilayer. Residues 189–194 (APTDLR) are Cytoplasmic-facing. The chain crosses the membrane as a helical span at residues 195–215 (GGLVSLYQLNMTFGIFLGYCS). Over 216-229 (VYGTRKYDNTAQWR) the chain is Extracellular. A helical membrane pass occupies residues 230 to 250 (VPLGLCFLWTLIIIIGMLLVP). Over 251–333 (ESPRYLIECE…VQTFLQLTGE (83 aa)) the chain is Cytoplasmic. The helical transmembrane segment at 334–350 (NYFFFYGTTIFKSVGLT) threads the bilayer. Residues 351-356 (DGFETS) lie on the Extracellular side of the membrane. A helical transmembrane segment spans residues 357-374 (IVLGTVNFFSTIIAVMVV). Residues 375–381 (DKIGRRK) are Cytoplasmic-facing. A helical membrane pass occupies residues 382 to 402 (CLLFGAAGMMACMVIFASIGV). At 403–424 (KCLYPHGQDGPSSKGAGNAMIV) the chain is on the extracellular side. Residues 425-445 (FTCFYIFCFATTWAPVAYIVV) form a helical membrane-spanning segment. Residues 446-462 (AESFPSKVKSRAMSIST) lie on the Cytoplasmic side of the membrane. The chain crosses the membrane as a helical span at residues 463–483 (ACNWLWQFLIGFFTPFITGSI). Position 484 (His-484) is a topological domain, extracellular. A helical membrane pass occupies residues 485–505 (FYYGYVFVGCLVAMFLYVFFF). Residues 506–564 (LPETIGLSLEEIQLLYEEGIKPWKSASWVPPSRRGIPSEESKTEKKDWKKFLKFSKGSD) lie on the Cytoplasmic side of the membrane.

The protein belongs to the major facilitator superfamily. Sugar transporter (TC 2.A.1.1) family.

It is found in the membrane. Probable glucose transporter. This is Hexose transporter HXT17 (HXT17) from Saccharomyces cerevisiae (strain ATCC 204508 / S288c) (Baker's yeast).